A 225-amino-acid polypeptide reads, in one-letter code: NAD(P)H-quinone oxidoreductase subunit K, chloroplastic (225 aa).

[4Fe-4S] cluster contacts are provided by Cys43, Cys44, Cys108, and Cys139.

This sequence belongs to the complex I 20 kDa subunit family. In terms of assembly, NDH is composed of at least 16 different subunits, 5 of which are encoded in the nucleus. It depends on [4Fe-4S] cluster as a cofactor.

It localises to the plastid. Its subcellular location is the chloroplast thylakoid membrane. It catalyses the reaction a plastoquinone + NADH + (n+1) H(+)(in) = a plastoquinol + NAD(+) + n H(+)(out). The catalysed reaction is a plastoquinone + NADPH + (n+1) H(+)(in) = a plastoquinol + NADP(+) + n H(+)(out). NDH shuttles electrons from NAD(P)H:plastoquinone, via FMN and iron-sulfur (Fe-S) centers, to quinones in the photosynthetic chain and possibly in a chloroplast respiratory chain. The immediate electron acceptor for the enzyme in this species is believed to be plastoquinone. Couples the redox reaction to proton translocation, and thus conserves the redox energy in a proton gradient. This Draba nemorosa (Woodland whitlowgrass) protein is NAD(P)H-quinone oxidoreductase subunit K, chloroplastic.